The primary structure comprises 161 residues: DNA-directed RNA polymerase 18 kDa subunit (161 aa).

It belongs to the poxviridae DNA-directed RNA polymerase 18 kDa subunit family. As to quaternary structure, the DNA-dependent RNA polymerase used for intermediate and late genes expression consists of eight subunits Rpo30/OPG66, Rpo7/OPG90, Rpo22/OPG103, Rpo147/OPG105, Rpo18/OPG119, Rpo19/OPG131, Rpo132/OPG151 and Rpo35/OPG156. The same holoenzyme, with the addition of the transcription-specificity factor OPG109, is used for early gene expression.

It localises to the virion. The catalysed reaction is RNA(n) + a ribonucleoside 5'-triphosphate = RNA(n+1) + diphosphate. Part of the DNA-dependent RNA polymerase which catalyzes the transcription of viral DNA into RNA using the four ribonucleoside triphosphates as substrates. Responsible for the transcription of early, intermediate and late genes. DNA-dependent RNA polymerase associates with the early transcription factor (ETF), itself composed of OPG118 and OPG133, thereby allowing the early genes transcription. Late transcription, and probably also intermediate transcription, require newly synthesized RNA polymerase. This Vaccinia virus (strain Ankara) (VACV) protein is DNA-directed RNA polymerase 18 kDa subunit (OPG119).